We begin with the raw amino-acid sequence, 217 residues long: GRB2-related adapter protein (217 aa).

In terms of domain architecture, SH3 1 spans 1–58 (MESVALYSFQATESDELAFNKGDTLKILNMEDDQNWYKAELRGAEGFVPKNYIRLKPH). One can recognise an SH2 domain in the interval 60-152 (WYSGRISRQL…KRQVFLQDEE (93 aa)). The SH3 2 domain occupies 158–217 (PRACFAQAQFDFSAQDPSQLSFRRGDIIEVLERLDPSWWRGRLSGRIGFFPRSYVQPVHM).

This sequence belongs to the GRB2/sem-5/DRK family. As to quaternary structure, associates through its SH2 domain with ligand-activated receptors for stem cell factor (KIT) and erythropoietin (EPOR). Also forms a stable complex with the Bcr-Abl oncoprotein. GRAP is associated with the Ras guanine nucleotide exchange factor SOS1, primarily through its N-terminal SH3 domain. Interacts with phosphorylated LAT upon TCR activation. Interacts with SHB.

The protein localises to the membrane. The protein resides in the synapse. In terms of biological role, couples signals from receptor and cytoplasmic tyrosine kinases to the Ras signaling pathway. Plays a role in the inner ear and in hearing. This chain is GRB2-related adapter protein (GRAP), found in Bos taurus (Bovine).